A 189-amino-acid chain; its full sequence is MDHTDDRKMYGTTILSIRRGNSVIVAGDGQVTLGSTIMKTSARKIKRLASNTVITGFAGATADAFTLFERLEGKLEKHPGQLMRACVELAKDWRQDKYLRRLEAMMIVADKSVSLVISGGGDVLEPENGIAAIGSGGNLALAAARALCAAQDEFAPAMPLEYIVAKSMAIAAEICIYTNNNIVMEKIEG.

Thr12 is an active-site residue. The Na(+) site is built by Ala172, Cys175, and Thr178.

It belongs to the peptidase T1B family. HslV subfamily. As to quaternary structure, a double ring-shaped homohexamer of HslV is capped on each side by a ring-shaped HslU homohexamer. The assembly of the HslU/HslV complex is dependent on binding of ATP.

The protein resides in the cytoplasm. It carries out the reaction ATP-dependent cleavage of peptide bonds with broad specificity.. Allosterically activated by HslU binding. Its function is as follows. Protease subunit of a proteasome-like degradation complex believed to be a general protein degrading machinery. This is ATP-dependent protease subunit HslV from Anaplasma phagocytophilum (strain HZ).